The chain runs to 141 residues: Nucleoside diphosphate kinase (141 aa).

6 residues coordinate ATP: Lys-11, Phe-59, Arg-87, Thr-93, Arg-104, and Asn-114. The Pros-phosphohistidine intermediate role is filled by His-117.

This sequence belongs to the NDK family. In terms of assembly, homotetramer. It depends on Mg(2+) as a cofactor.

It is found in the cytoplasm. It carries out the reaction a 2'-deoxyribonucleoside 5'-diphosphate + ATP = a 2'-deoxyribonucleoside 5'-triphosphate + ADP. The catalysed reaction is a ribonucleoside 5'-diphosphate + ATP = a ribonucleoside 5'-triphosphate + ADP. Its function is as follows. Major role in the synthesis of nucleoside triphosphates other than ATP. The ATP gamma phosphate is transferred to the NDP beta phosphate via a ping-pong mechanism, using a phosphorylated active-site intermediate. The sequence is that of Nucleoside diphosphate kinase from Cupriavidus metallidurans (strain ATCC 43123 / DSM 2839 / NBRC 102507 / CH34) (Ralstonia metallidurans).